A 125-amino-acid polypeptide reads, in one-letter code: Type II secretion system protein I (125 aa).

The propeptide at 1–5 (MKQQG) is leader sequence. Methionine 6 is modified (N-methylmethionine). Residues 6 to 26 (MTLLEVMVALVIFALAGLTVL) traverse the membrane as a helical segment.

This sequence belongs to the GSP I family. Type II secretion is composed of four main components: the outer membrane complex, the inner membrane complex, the cytoplasmic secretion ATPase and the periplasm-spanning pseudopilus. Interacts with core component OutG. Cleaved by prepilin peptidase. In terms of processing, methylated by prepilin peptidase at the amino group of the N-terminal methionine once the leader sequence is cleaved by prepilin peptidase.

The protein localises to the cell inner membrane. Component of the type II secretion system required for the energy-dependent secretion of extracellular factors such as proteases and toxins from the periplasm. Part of the pseudopilus tip complex that is critical for the recognition and binding of secretion substrates. This chain is Type II secretion system protein I (outI), found in Dickeya chrysanthemi (Pectobacterium chrysanthemi).